The following is a 365-amino-acid chain: Protein RecA (365 aa).

Residue 69–76 (GPESSGKT) coordinates ATP. The tract at residues 344-365 (LDDNPDTDDHDVEDIDENTDEE) is disordered. Residues 347 to 365 (NPDTDDHDVEDIDENTDEE) show a composition bias toward acidic residues.

Belongs to the RecA family.

It localises to the cytoplasm. Its function is as follows. Can catalyze the hydrolysis of ATP in the presence of single-stranded DNA, the ATP-dependent uptake of single-stranded DNA by duplex DNA, and the ATP-dependent hybridization of homologous single-stranded DNAs. It interacts with LexA causing its activation and leading to its autocatalytic cleavage. The polypeptide is Protein RecA (Arthrospira platensis (Spirulina platensis)).